The chain runs to 125 residues: Basic leucine zipper transcriptional factor ATF-like (125 aa).

Over residues 1–14 the composition is skewed to low complexity; the sequence is MPHSSDSSDSSFSR. Residues 1 to 59 are disordered; sequence MPHSSDSSDSSFSRSPPPGKQDSSDDVRKVQRREKNRIAAQKSRQRQTQKADTLHLESE. The region spanning 26–89 is the bZIP domain; sequence DVRKVQRREK…KYFTSVLSSH (64 aa). Residues 28–50 form a basic motif region; sequence RKVQRREKNRIAAQKSRQRQTQK. The residue at position 43 (Ser-43) is a Phosphoserine. The residue at position 48 (Thr-48) is a Phosphothreonine. The tract at residues 54–75 is leucine-zipper; it reads LHLESEDLEKQNAALRKEIKQL.

Belongs to the bZIP family. Heterodimer; mainly heterodimerizes with JUNB. The BATF-JUNB heterodimer interacts with IRF4 and IRF8. Interacts (via bZIP domain) with IRF4 and IRF8; the interaction is direct. Also forms heterodimers with JUN and JUND. Interacts with IFI35. Phosphorylated on serine and threonine residues and at least one tyrosine residue. Phosphorylation at Ser-43 inhibit DNA binding activity and transforms it as a negative regulator of AP-1 mediated transcription. Detected in postnatal and adult lymphoid tissues such as thymus, spleen and lymph nodes. In thymus most concentrated expression is found in the immediate cortical layer. Differentially expressed during T-cell development in thymus. Highly expressed in Th17, Th1 and Th2 cells and in activated B-cells.

It localises to the nucleus. It is found in the cytoplasm. In terms of biological role, AP-1 family transcription factor that controls the differentiation of lineage-specific cells in the immune system: specifically mediates the differentiation of T-helper 17 cells (Th17), follicular T-helper cells (TfH), CD8(+) dendritic cells and class-switch recombination (CSR) in B-cells. Acts via the formation of a heterodimer with JUNB that recognizes and binds DNA sequence 5'-TGA[CG]TCA-3'. The BATF-JUNB heterodimer also forms a complex with IRF4 (or IRF8) in immune cells, leading to recognition of AICE sequence (5'-TGAnTCA/GAAA-3'), an immune-specific regulatory element, followed by cooperative binding of BATF and IRF4 (or IRF8) and activation of genes. Controls differentiation of T-helper cells producing interleukin-17 (Th17 cells) by binding to Th17-associated gene promoters: regulates expression of the transcription factor RORC itself and RORC target genes such as IL17 (IL17A or IL17B). Also involved in differentiation of follicular T-helper cells (TfH) by directing expression of BCL6 and MAF. In B-cells, involved in class-switch recombination (CSR) by controlling the expression of both AICDA and of germline transcripts of the intervening heavy-chain region and constant heavy-chain region (I(H)-C(H)). Following infection, can participate in CD8(+) dendritic cell differentiation via interaction with IRF4 and IRF8 to mediate cooperative gene activation. Regulates effector CD8(+) T-cell differentiation by regulating expression of SIRT1. Following DNA damage, part of a differentiation checkpoint that limits self-renewal of hematopoietic stem cells (HSCs): up-regulated by STAT3, leading to differentiation of HSCs, thereby restricting self-renewal of HSCs. In Mus musculus (Mouse), this protein is Basic leucine zipper transcriptional factor ATF-like (Batf).